The primary structure comprises 78 residues: Protein M6 (78 aa).

This sequence belongs to the A9/FIL1 family. Tapetum of anthers.

The protein resides in the secreted. The sequence is that of Protein M6 (M6) from Lilium henryi (Henry's lily).